The sequence spans 437 residues: Acyl-coenzyme A thioesterase 2, chloroplastic (437 aa).

Residues 1-13 constitute a chloroplast transit peptide; sequence MDLSSSPNHPITV. HotDog ACOT-type domains are found at residues 89–211 and 287–404; these read ILYN…RDSK and RDTR…RPEA.

The protein belongs to the acyl coenzyme A hydrolase family. In terms of tissue distribution, mostly expressed at low levels in glandular trichomes (lupulin glands), and, to a lower extent, in stems, leaves, flowers and cones.

The protein localises to the plastid. The protein resides in the chloroplast. In terms of biological role, acyl-CoA thioesterases are a group of enzymes that catalyze the hydrolysis of acyl-CoAs to the free fatty acid and coenzyme A (CoASH), providing the potential to regulate intracellular levels of acyl-CoAs, free fatty acids and CoASH. The chain is Acyl-coenzyme A thioesterase 2, chloroplastic from Humulus lupulus (European hop).